We begin with the raw amino-acid sequence, 312 residues long: Fasciclin-like arabinogalactan protein elcF (312 aa).

An N-terminal signal peptide occupies residues 1–16 (MKLFTLLLPALTSAHS). FAS1 domains are found at residues 17–160 (LSTL…NASM) and 162–289 (LPHN…DKVL). Residues N48, N68, N113, N157, and N165 are each glycosylated (N-linked (GlcNAc...) asparagine).

The protein belongs to the fasciclin-like AGP family.

It functions in the pathway secondary metabolite biosynthesis. Its function is as follows. Fasciclin-like arabinogalactan protein; part of the gene cluster that mediates the biosynthesis of elsinochrome C, a perelyenequinone phytotoxin structurally similar to cercosporin. The first step of elsinochrome C biosynthesis is performed by the polyketide synthase elcA which catalyzes the formation of nor-toralactone. The starter unit acyltransferase (SAT) domain of elcA initiates polyketide extension by the selective utilization of acetyl-CoA, which is elongated to the heptaketide in the beta-ketoacyl synthase (KS) domain by successive condensations with six malonyl units introduced by the malonyl acyltransferase (MAT) domain. The product template (PT) domain catalyzes C4-C9 and C2-C11 aldol cyclizations and dehydrations to a trihydroxynaphthalene, which is thought to be delivered to the thioesterase (TE) domain for product release. The bifunctional enzyme elcB then methylates nor-toralactone to toralactone before conducting an unusual oxidative aromatic ring opening. The next step in perylenequinone biosynthesis is an O-methylation at the nascent OH-6 of the elcB product performed by the O-methyltransferase elcD. The oxidative coupling of the two monomeric naphthol units in perylenequinone biosynthesis is catalyzed by the FAD-dependent monooxygenase elcE and the multicopper oxidase elcG. ElcG might catalyze the first intermolecular coupling in a regio- and stereo-selective manner via a phenol radical coupling mechanism and the elcE could forge the second C-C bond intramolecularly via a hydride transfer mechanism. The fasciclin domain-containing protein elcF might also play a role duting this step. The last piece of the puzzle in the biosynthesis of elsinochrome C is the additional annulation by enolate coupling to afford the dihydrobenzo(ghi)perylenequinone system, catalyzed by the FAD-dependent monooxygenase elcH. This chain is Fasciclin-like arabinogalactan protein elcF, found in Phaeosphaeria nodorum (strain SN15 / ATCC MYA-4574 / FGSC 10173) (Glume blotch fungus).